The following is a 424-amino-acid chain: Serine incorporator 5 (424 aa).

Residues methionine 1 to phenylalanine 6 are Extracellular-facing. A helical transmembrane segment spans residues isoleucine 7–histidine 23. The Cytoplasmic portion of the chain corresponds to lysine 24–serine 52. Residues alanine 53 to leucine 73 form a helical membrane-spanning segment. The Extracellular portion of the chain corresponds to lysine 74–asparagine 87. Asparagine 76 is a glycosylation site (N-linked (GlcNAc...) asparagine). A helical membrane pass occupies residues glycine 88–proline 108. At aspartate 109–tyrosine 119 the chain is on the cytoplasmic side. The chain crosses the membrane as a helical span at residues valine 120–alanine 140. Residues histidine 141 to leucine 161 are Extracellular-facing. Asparagine 146 carries an N-linked (GlcNAc...) asparagine glycan. The helical transmembrane segment at alanine 162–phenylalanine 182 threads the bilayer. Residues tyrosine 183–lysine 193 are Cytoplasmic-facing. A helical membrane pass occupies residues isoleucine 194–cysteine 214. At valine 215 to histidine 221 the chain is on the extracellular side. The helical transmembrane segment at serine 222–leucine 242 threads the bilayer. The Cytoplasmic segment spans residues serine 243–asparagine 274. Residues leucine 275 to serine 295 form a helical membrane-spanning segment. The Extracellular segment spans residues threonine 296–glycine 348. A helical transmembrane segment spans residues threonine 349–methionine 369. Residues threonine 370–serine 391 lie on the Cytoplasmic side of the membrane. The chain crosses the membrane as a helical span at residues isoleucine 392–valine 412. The Extracellular portion of the chain corresponds to alanine 413–valine 424.

The protein belongs to the TDE1 family.

It is found in the cell membrane. The enzyme catalyses a 1,2-diacyl-sn-glycero-3-phospho-L-serine(in) = a 1,2-diacyl-sn-glycero-3-phospho-L-serine(out). It carries out the reaction a 1,2-diacyl-sn-glycero-3-phosphocholine(in) = a 1,2-diacyl-sn-glycero-3-phosphocholine(out). The catalysed reaction is a 1,2-diacyl-sn-glycero-3-phosphoethanolamine(in) = a 1,2-diacyl-sn-glycero-3-phosphoethanolamine(out). Its function is as follows. Restriction factor required to restrict infectivity of gammaretroviruses: acts by inhibiting an early step of viral infection. Impairs the penetration of the viral particle into the cytoplasm. Non-ATP-dependent, non-specific lipid transporter for phosphatidylserine, phosphatidylcholine, and phosphatidylethanolamine. Functions as a scramblase that flips lipids in both directions across the membrane. Phospholipid scrambling results in gammaretroviral surface exposure of phosphatidylserine and loss of membrane asymmetry, which leads to loss of infectivity. Enhances the incorporation of serine into phosphatidylserine and sphingolipids. May play a role in providing serine molecules for the formation of myelin glycosphingolipids in oligodendrocytes. The polypeptide is Serine incorporator 5 (SERINC5) (Macaca fascicularis (Crab-eating macaque)).